We begin with the raw amino-acid sequence, 78 residues long: Delta-conotoxin-like CVIE (78 aa).

The signal sequence occupies residues methionine 1–alanine 22. A propeptide spanning residues aspartate 23–asparagine 49 is cleaved from the precursor. Disulfide bonds link cysteine 54/cysteine 69, cysteine 61/cysteine 73, and cysteine 68/cysteine 77. The residue at position 65 (proline 65) is a 4-hydroxyproline.

The protein belongs to the conotoxin O1 superfamily. As to expression, expressed by the venom duct.

It localises to the secreted. In terms of biological role, delta-conotoxins bind to site 6 of voltage-gated sodium channels (Nav) and inhibit the inactivation process. The protein is Delta-conotoxin-like CVIE of Conus catus (Cat cone).